The sequence spans 312 residues: Tumor necrosis factor receptor type 1-associated DEATH domain protein (312 aa).

The short motif at 147–163 (LRDEELAELEDALRNLK) is the Nuclear export signal element. The tract at residues 170–195 (GGDGEVASAPLQPPVPSLSEVKPPPP) is disordered. Positions 179-289 (PLQPPVPSLS…ATLQRLVEAL (111 aa)) constitute a Death domain. Positions 180–195 (LQPPVPSLSEVKPPPP) are enriched in pro residues. An interaction with KRT14 and KRT18 region spans residues 222–289 (FARSVGLKWR…ATLQRLVEAL (68 aa)). Positions 231–244 (RKVGRSLQRGCRAL) match the Nuclear localization signal motif. Residues Arg235 and Arg245 are each glycosylated ((Microbial infection) N-beta-linked (GlcNAc) arginine).

As to quaternary structure, stimulation of TNF-alpha receptor TNFRSF1A leads to the formation of two distinct signaling complexes. Plasma membrane-bound complex I is composed of TNFRSF1A, TRADD, RIPK1, TRAF2 and BIRC2/c-IAP1 or BIRC3 which interacts with CHUCK/IKK-alpha, IKBKB/IKK-beta and IKBKG/IKK-gamma promoting cell survival. Subsequently, TRADD, RIPK1 and TRAF2 dissociate from TNFRSF1A and form cytoplasmic complex II with FADD and caspase CASP8 promoting cell apoptosis. Within complex I, interacts with TNFRSF1A/TNFR1, TRAF2 and kinase RIPK1. Within complex I, interacts with TRPC4AP; the interaction promotes NF-kappa B activation. UXT1 associates with complex I; the interaction prevents the formation of complex II. Within complex I Interacts with scaffold protein DAB2IP. Interacts with autophagy receptor SQSTM1. Interacts with E3 ligase TRIP12. Interacts with kinase HIPK2. Interacts with keratin KRT14. Interacts with keratin KRT18. Interacts with keratins KRT16 and KRT17. Interacts with FADD. Interacts with TOMM70. Interacts with TMC8; the interaction impairs the formation of complex I and facilites complex II formation. Post-translationally, (Microbial infection) Glycosylated at Arg-235 by enteropathogenic E.coli protein NleB1, C.rodentium protein NleB and S.typhimurium proteins Ssek1 and Ssek3: arginine GlcNAcylation prevents homotypic/heterotypic death domain interactions and assembly of the oligomeric TNFRSF1A/TNFR1 complex, thereby disrupting TNF signaling. As to expression, found in all examined tissues.

The protein resides in the nucleus. It localises to the cytoplasm. It is found in the cytoskeleton. Functionally, adapter molecule for TNFRSF1A/TNFR1 that specifically associates with the cytoplasmic domain of activated TNFRSF1A/TNFR1 mediating its interaction with FADD. Overexpression of TRADD leads to two major TNF-induced responses, apoptosis and activation of NF-kappa-B. The nuclear form acts as a tumor suppressor by preventing ubiquitination and degradation of isoform p19ARF/ARF of CDKN2A by TRIP12: acts by interacting with TRIP12, leading to disrupt interaction between TRIP12 and isoform p19ARF/ARF of CDKN2A. This chain is Tumor necrosis factor receptor type 1-associated DEATH domain protein, found in Homo sapiens (Human).